Consider the following 305-residue polypeptide: Coenzyme PQQ synthesis protein B (305 aa).

It belongs to the PqqB family.

Its pathway is cofactor biosynthesis; pyrroloquinoline quinone biosynthesis. Functionally, may be involved in the transport of PQQ or its precursor to the periplasm. The chain is Coenzyme PQQ synthesis protein B from Methylobacillus flagellatus (strain ATCC 51484 / DSM 6875 / VKM B-1610 / KT).